Consider the following 172-residue polypeptide: Transcriptional repressor NrdR (172 aa).

Residues 3–34 fold into a zinc finger; the sequence is CPFCGEADTKVIDSRLVAEGDQVRRRRECLSC. The 91-residue stretch at 49–139 folds into the ATP-cone domain; it reads PRVVKQDGTR…VYRSFQDINE (91 aa).

Belongs to the NrdR family. The cofactor is Zn(2+).

Functionally, negatively regulates transcription of bacterial ribonucleotide reductase nrd genes and operons by binding to NrdR-boxes. The sequence is that of Transcriptional repressor NrdR from Marinobacter nauticus (strain ATCC 700491 / DSM 11845 / VT8) (Marinobacter aquaeolei).